The chain runs to 2556 residues: Ubiquitin carboxyl-terminal hydrolase 9Y (2556 aa).

Residues 1-33 (MTITTRGSPVGENESQGQTSDGQPQPSFQQNQI) show a composition bias toward polar residues. A disordered region spans residues 1-68 (MTITTRGSPV…QHEEEDPSFP (68 aa)). Positions 34–44 (SSSDSSNETSP) are enriched in low complexity. Ser-587 bears the Phosphoserine mark. Thr-589 carries the post-translational modification Phosphothreonine. The tract at residues 971–999 (NMPSSPDSSSDSSAGPPGNHSHNNYRDVS) is disordered. Positions 973-983 (PSSPDSSSDSS) are enriched in low complexity. The region spanning 1559-1958 (VGLKNAGATC…NAYILFYERM (400 aa)) is the USP domain. Cys-1568 (nucleophile) is an active-site residue. Positions 1729, 1731, 1773, and 1776 each coordinate Zn(2+). His-1881 acts as the Proton acceptor in catalysis. Ser-2447 carries the post-translational modification Phosphoserine. The disordered stretch occupies residues 2513–2556 (QNYVPEQPFSGPASHHLNNPQKNDKPQETHESNEEISSCLIKDQ). The segment covering 2534-2545 (KNDKPQETHESN) has biased composition (basic and acidic residues). Ser-2549 carries the phosphoserine modification.

Belongs to the peptidase C19 family.

It catalyses the reaction Thiol-dependent hydrolysis of ester, thioester, amide, peptide and isopeptide bonds formed by the C-terminal Gly of ubiquitin (a 76-residue protein attached to proteins as an intracellular targeting signal).. Its pathway is protein modification; protein ubiquitination. Deubiquitinase that mediates deubiquitination of target proteins. May stabilize target proteins that are important for male germ cell development. This Mus musculus (Mouse) protein is Ubiquitin carboxyl-terminal hydrolase 9Y.